Consider the following 55-residue polypeptide: Large ribosomal subunit protein bL33 (55 aa).

It belongs to the bacterial ribosomal protein bL33 family.

This is Large ribosomal subunit protein bL33 from Escherichia coli (strain K12 / DH10B).